Here is a 299-residue protein sequence, read N- to C-terminus: rRNA methyltransferase (299 aa).

Residues 14–53 (AEKRSGRGRMAAARTTGAQSRKTAQRSGRSEADRRRRVHG) are disordered. Positions 21–31 (GRMAAARTTGA) are enriched in low complexity. S-adenosyl-L-methionine is bound by residues Asn55, Leu57, Gly82, Glu103, Asp128, and Asn144.

The protein belongs to the class I-like SAM-binding methyltransferase superfamily. rRNA adenine N(6)-methyltransferase family.

Functionally, probable RNA methylase. Confers resistance to carbomycin and several other macrolides, lincomycin and vernamycin B, but not to all macrolide-lincosamide-streptogramin B antibiotics. This chain is rRNA methyltransferase (carB), found in Streptomyces thermotolerans.